A 368-amino-acid chain; its full sequence is MQRVIIVGSTGSIGTQAIDFILKNRDSFLVVGLAASTQTSLLREQAQVFGTKNTAQGASEAAELIEATEADVVLNAITGAAGLLSTYATLKTGKRLALANKESLIMGGKYFLDMTSFKGQITPVDSEHSAIAQAMKSGKFSEVNKLILTASGGPFYDRESLEGITLKDALDHPTWNMGPMISINSATMFNKGLEIIEAHLLFGIPYSQIDVVIHPQSIVHSMVEYKDGSVIAQASVADMTLPIGYALSWPNRALNAVRPLEWGARQRWDFLPPTENSMRSINLARRAGEAGGVYPAVLNASNECAVEAFMAGKISFARIIHVTETVFNLYTKQHTNRESAKNPIEVILEEDARTRELAKTVIENMSAD.

NADPH is bound by residues Thr-10, Gly-11, Ser-12, Ile-13, Gln-38, and Asn-100. Residue Lys-101 participates in 1-deoxy-D-xylulose 5-phosphate binding. Glu-102 contacts NADPH. Asp-125 is a Mn(2+) binding site. Positions 126, 127, 151, and 172 each coordinate 1-deoxy-D-xylulose 5-phosphate. Glu-127 serves as a coordination point for Mn(2+). Position 178 (Gly-178) interacts with NADPH. Positions 185, 190, 191, and 194 each coordinate 1-deoxy-D-xylulose 5-phosphate. Residue Glu-194 coordinates Mn(2+).

Belongs to the DXR family. The cofactor is Mg(2+). It depends on Mn(2+) as a cofactor.

It catalyses the reaction 2-C-methyl-D-erythritol 4-phosphate + NADP(+) = 1-deoxy-D-xylulose 5-phosphate + NADPH + H(+). Its pathway is isoprenoid biosynthesis; isopentenyl diphosphate biosynthesis via DXP pathway; isopentenyl diphosphate from 1-deoxy-D-xylulose 5-phosphate: step 1/6. Catalyzes the NADPH-dependent rearrangement and reduction of 1-deoxy-D-xylulose-5-phosphate (DXP) to 2-C-methyl-D-erythritol 4-phosphate (MEP). This is 1-deoxy-D-xylulose 5-phosphate reductoisomerase from Tropheryma whipplei (strain TW08/27) (Whipple's bacillus).